The primary structure comprises 171 residues: Terminase, small subunit (171 aa).

It belongs to the P23virus small terminase family. In terms of assembly, homononamer; forms a ring-like structure through which genomic DNA is translocated into the capsid. Heterodimer with the terminase large subunit; the active complex is probably heterooligomeric.

The terminase small subunit binds to the packaging initiation site and regulates the ATPase activity of the terminase large subunit. The terminase lies at a unique vertex of the procapsid and is composed of two subunits, a small terminase subunit involved in viral DNA recognition (packaging sequence), and a large terminase subunit. Both terminase subunits heterooligomerize and are docked on the portal protein to form the packaging machine. This is Terminase, small subunit from Thermus virus P23-45 (Thermus thermophilus phage P23-45).